The following is a 97-amino-acid chain: Aspartyl/glutamyl-tRNA(Asn/Gln) amidotransferase subunit C (97 aa).

This sequence belongs to the GatC family. As to quaternary structure, heterotrimer of A, B and C subunits.

It carries out the reaction L-glutamyl-tRNA(Gln) + L-glutamine + ATP + H2O = L-glutaminyl-tRNA(Gln) + L-glutamate + ADP + phosphate + H(+). The catalysed reaction is L-aspartyl-tRNA(Asn) + L-glutamine + ATP + H2O = L-asparaginyl-tRNA(Asn) + L-glutamate + ADP + phosphate + 2 H(+). Functionally, allows the formation of correctly charged Asn-tRNA(Asn) or Gln-tRNA(Gln) through the transamidation of misacylated Asp-tRNA(Asn) or Glu-tRNA(Gln) in organisms which lack either or both of asparaginyl-tRNA or glutaminyl-tRNA synthetases. The reaction takes place in the presence of glutamine and ATP through an activated phospho-Asp-tRNA(Asn) or phospho-Glu-tRNA(Gln). This chain is Aspartyl/glutamyl-tRNA(Asn/Gln) amidotransferase subunit C, found in Listeria welshimeri serovar 6b (strain ATCC 35897 / DSM 20650 / CCUG 15529 / CIP 8149 / NCTC 11857 / SLCC 5334 / V8).